A 209-amino-acid chain; its full sequence is Uracil phosphoribosyltransferase (209 aa).

5-phospho-alpha-D-ribose 1-diphosphate-binding positions include Arg-79, Arg-104, and Asp-131 to Ser-139. Residues Ile-194 and Gly-199–Ala-201 contribute to the uracil site. A 5-phospho-alpha-D-ribose 1-diphosphate-binding site is contributed by Asp-200.

The protein belongs to the UPRTase family. Requires Mg(2+) as cofactor.

It carries out the reaction UMP + diphosphate = 5-phospho-alpha-D-ribose 1-diphosphate + uracil. Its pathway is pyrimidine metabolism; UMP biosynthesis via salvage pathway; UMP from uracil: step 1/1. Its activity is regulated as follows. Allosterically activated by GTP. Functionally, catalyzes the conversion of uracil and 5-phospho-alpha-D-ribose 1-diphosphate (PRPP) to UMP and diphosphate. This Geobacter sp. (strain M21) protein is Uracil phosphoribosyltransferase.